The chain runs to 164 residues: Axial regulator YABBY 5 (164 aa).

Residues 16-43 form a C4-type zinc finger; it reads CNFCNIILAVNVPCSSLFDIVTVRCGHC.

Belongs to the YABBY family. Binds to LUG and LUH; these complexes promote adaxial cell identity in leaves as well as embryonic shoot apical meristem (SAM) initiation and postembryonic SAM maintenance. Interacts with SPL/NZZ and SPEAR2.

The protein localises to the nucleus. Its function is as follows. Promotes adaxial cell identity. Regulates the initiation of embryonic shoot apical meristem (SAM) development. In Arabidopsis thaliana (Mouse-ear cress), this protein is Axial regulator YABBY 5 (YAB5).